Reading from the N-terminus, the 438-residue chain is Histidinol dehydrogenase (438 aa).

Residues Tyr135, Gln193, and Asn216 each coordinate NAD(+). Residues Ser243, Gln265, and His268 each coordinate substrate. Gln265 and His268 together coordinate Zn(2+). Active-site proton acceptor residues include Glu332 and His333. 4 residues coordinate substrate: His333, Asp366, Glu420, and His425. Asp366 contributes to the Zn(2+) binding site. His425 serves as a coordination point for Zn(2+).

The protein belongs to the histidinol dehydrogenase family. The cofactor is Zn(2+).

The catalysed reaction is L-histidinol + 2 NAD(+) + H2O = L-histidine + 2 NADH + 3 H(+). It functions in the pathway amino-acid biosynthesis; L-histidine biosynthesis; L-histidine from 5-phospho-alpha-D-ribose 1-diphosphate: step 9/9. Functionally, catalyzes the sequential NAD-dependent oxidations of L-histidinol to L-histidinaldehyde and then to L-histidine. The sequence is that of Histidinol dehydrogenase from Shewanella oneidensis (strain ATCC 700550 / JCM 31522 / CIP 106686 / LMG 19005 / NCIMB 14063 / MR-1).